Consider the following 38-residue polypeptide: Humanin-like protein (38 aa).

In terms of tissue distribution, in the testis, expressed in Leydig cells at 10, 20 and 60 days of age (at protein level). Also expressed in pachytene spermatocytes at day 20 and in vessels, peritubular cells and spermatids at day 60. Not detected in Sertoli cells (at protein level). In the adult ovary, expressed in stromal cells, granulosa cells, theca cells and oocytes at diestrus and proestrus (at protein level). Expressed in the anterior pituitary where it is detected in lactotropes and somatotropes with lower levels in females than males (at protein level). In the hippocampus, expressed in astrocytes but not in neurons or oligodendrocytes (at protein level). Expressed in muscle, liver and hypothalamus but not in epididymal fat (at protein level). Widely expressed with highest levels in cardiac and skeletal muscle and lowest levels in lung, testis and uterus. In the CNS, levels are relatively high in the cerebellum and cortex and low in the hippocampus. In the hippocampus, lower levels are detected in ovariectomized animals than in controls.

It localises to the mitochondrion. The protein localises to the secreted. Its subcellular location is the cytoplasm. Functionally, plays a role as a neuroprotective factor. Protects against neuronal cell death induced by amyloid-beta peptides. Also protects against excitotoxic cell death. Prevents amyloid-beta peptide-induced spatial learning and memory impairments, protects against amyloid-beta peptide-induced suppression of hippocampal long-term potentiation, and inhibits amyloid-beta peptide-induced activation of STAT3 and inhibition of CASP3. Prevents glutamate-induced dendritic atrophy in hippocampal neurons and also prevents glutamate-induced decrease in SYP puncta number and total puncta area. Protects anterior pituitary cells from TNF-induced apoptosis. Plays a role in ovarian follicle development by acting as a cryoprotective factor for granulosa cells in the antral follicle. Increases androgen production in Leydig cells and promotes Leydig cell survival by preventing apoptosis. The protein is Humanin-like protein of Rattus norvegicus (Rat).